We begin with the raw amino-acid sequence, 305 residues long: Protoheme IX farnesyltransferase (305 aa).

The next 9 membrane-spanning stretches (helical) occupy residues 26-46, 47-67, 98-118, 119-139, 147-167, 174-194, 220-240, 243-263, and 284-304; these read VMSL…QPVN, PFVA…SGAL, LAVG…AANW, FAAG…TIWL, IVIG…CATG, LLMF…LALF, IFAY…TSVG, LYLA…WQIL, and LSLY…WVGG.

The protein belongs to the UbiA prenyltransferase family. Protoheme IX farnesyltransferase subfamily. Interacts with CtaA.

It is found in the cell inner membrane. The enzyme catalyses heme b + (2E,6E)-farnesyl diphosphate + H2O = Fe(II)-heme o + diphosphate. The protein operates within porphyrin-containing compound metabolism; heme O biosynthesis; heme O from protoheme: step 1/1. In terms of biological role, converts heme B (protoheme IX) to heme O by substitution of the vinyl group on carbon 2 of heme B porphyrin ring with a hydroxyethyl farnesyl side group. In Paracoccus denitrificans (strain Pd 1222), this protein is Protoheme IX farnesyltransferase.